The following is an 87-amino-acid chain: MTIKLINIGFGNIVSANRIISIVSPESAPIKRIMQEARDRNMLIDATYGRRTRAVIVTDSDHVILSAVQPETVAQRLHTKEDGVEDA.

It belongs to the RemA family.

This Shouchella clausii (strain KSM-K16) (Alkalihalobacillus clausii) protein is Putative regulatory protein ABC2323.